A 543-amino-acid polypeptide reads, in one-letter code: Acrosin-binding protein (543 aa).

An N-terminal signal peptide occupies residues 1 to 25 (MGQPAAGSILTLLRVLLLPLGPALA). The pro-ACR binding stretch occupies residues 26–106 (QDSPSAPTPG…ASWFESFCQF (81 aa)). Positions 26-276 (QDSPSAPTPG…DPHSFTARVR (251 aa)) are cleaved as a propeptide — removed in mature form. A disordered region spans residues 187-239 (AGQEQAAGHKQEQGQEQHKQDPTQEHKQDDGQEQEEQEEEQEEEGKQEEGQSV). A compositionally biased stretch (basic and acidic residues) spans 193–216 (AGHKQEQGQEQHKQDPTQEHKQDD). A compositionally biased stretch (acidic residues) spans 217–232 (GQEQEEQEEEQEEEGK). Residues 319-427 (LPHKEALLVL…TQAGTSESGR (109 aa)) are pro-ACR binding.

Binds proacrosin (ACR). Does not bind the mature form of ACR. Post-translationally, the N-terminus is blocked. In terms of processing, phosphorylated on Tyr residues in capacitated sperm. Synthesized as a 60-kDa precursor, the 32-kDa mature form is post-translationally produced by the removal of the N-terminal half of the precursor during sperm maturation in the testis and/or epididymis. As to expression, specifically expressed in testis.

The protein resides in the secreted. It localises to the cytoplasmic vesicle. Its subcellular location is the secretory vesicle. It is found in the acrosome. In terms of biological role, acrosomal protein that maintains proacrosin (pro-ACR) as an enzymatically inactive zymogen in the acrosome. Involved also in the acrosome formation. This is Acrosin-binding protein (ACRBP) from Cavia porcellus (Guinea pig).